Reading from the N-terminus, the 1386-residue chain is DNA-directed RNA polymerase subunit beta (1386 aa).

The protein belongs to the RNA polymerase beta chain family. In terms of assembly, in plastids the minimal PEP RNA polymerase catalytic core is composed of four subunits: alpha, beta, beta', and beta''. When a (nuclear-encoded) sigma factor is associated with the core the holoenzyme is formed, which can initiate transcription.

Its subcellular location is the plastid. The protein resides in the chloroplast. The catalysed reaction is RNA(n) + a ribonucleoside 5'-triphosphate = RNA(n+1) + diphosphate. DNA-dependent RNA polymerase catalyzes the transcription of DNA into RNA using the four ribonucleoside triphosphates as substrates. This chain is DNA-directed RNA polymerase subunit beta, found in Thalassiosira pseudonana (Marine diatom).